The chain runs to 339 residues: Lipoyl synthase (339 aa).

The tract at residues 13 to 35 (RPKLDAPARPRHPEKAHRPDTAI) is disordered. Residues C68, C73, C79, C94, C98, C101, and S307 each contribute to the [4Fe-4S] cluster site. The Radical SAM core domain maps to 80-296 (WEKRHATFMI…ETTAYAKGFL (217 aa)).

It belongs to the radical SAM superfamily. Lipoyl synthase family. The cofactor is [4Fe-4S] cluster.

It is found in the cytoplasm. It carries out the reaction [[Fe-S] cluster scaffold protein carrying a second [4Fe-4S](2+) cluster] + N(6)-octanoyl-L-lysyl-[protein] + 2 oxidized [2Fe-2S]-[ferredoxin] + 2 S-adenosyl-L-methionine + 4 H(+) = [[Fe-S] cluster scaffold protein] + N(6)-[(R)-dihydrolipoyl]-L-lysyl-[protein] + 4 Fe(3+) + 2 hydrogen sulfide + 2 5'-deoxyadenosine + 2 L-methionine + 2 reduced [2Fe-2S]-[ferredoxin]. It participates in protein modification; protein lipoylation via endogenous pathway; protein N(6)-(lipoyl)lysine from octanoyl-[acyl-carrier-protein]: step 2/2. Its function is as follows. Catalyzes the radical-mediated insertion of two sulfur atoms into the C-6 and C-8 positions of the octanoyl moiety bound to the lipoyl domains of lipoate-dependent enzymes, thereby converting the octanoylated domains into lipoylated derivatives. The protein is Lipoyl synthase of Methylorubrum extorquens (strain PA1) (Methylobacterium extorquens).